Consider the following 178-residue polypeptide: Mediator of RNA polymerase II transcription subunit 31 (178 aa).

Over residues 129 to 140 (EGQELEESEDEA) the composition is skewed to acidic residues. A disordered region spans residues 129–178 (EGQELEESEDEADIRQKDTEDEDDEETMKKPDADTAEKNSTTSTVSKKEK). A compositionally biased stretch (basic and acidic residues) spans 155-165 (TMKKPDADTAE). A compositionally biased stretch (polar residues) spans 166–178 (KNSTTSTVSKKEK).

This sequence belongs to the Mediator complex subunit 31 family. Component of the Mediator complex.

It is found in the nucleus. Component of the Mediator complex, a coactivator involved in the regulated transcription of nearly all RNA polymerase II-dependent genes. Mediator functions as a bridge to convey information from gene-specific regulatory proteins to the basal RNA polymerase II transcription machinery. Mediator is recruited to promoters by direct interactions with regulatory proteins and serves as a scaffold for the assembly of a functional preinitiation complex with RNA polymerase II and the general transcription factors. This chain is Mediator of RNA polymerase II transcription subunit 31, found in Caenorhabditis elegans.